The primary structure comprises 734 residues: Cytoplasmic polyadenylation element-binding protein 3 (734 aa).

Disordered regions lie at residues 1-31 (MDRNDDSAPVQAAAEPAEHPGDEKSGKRNVP), 98-185 (GSKK…AARN), and 220-283 (RGSL…LPPR). A compositionally biased stretch (basic and acidic residues) spans 16–26 (PAEHPGDEKSG). Low complexity-rich tracts occupy residues 121 to 140 (SRRTTPTASASTAKTTSPSR) and 232 to 242 (KSFSSTTTSSS). Basic and acidic residues predominate over residues 243 to 256 (PEKEREKEKEKIEQ). The segment covering 259 to 275 (YGTTQRQSVNSQQSSAS) has biased composition (polar residues). The RRM domain maps to 294 to 316 (IFVGGVPWDITEAALKDSFGEFG). 2 disordered regions span residues 564 to 593 (KAYQGHASRHSHLSSNSPSKARDGQNSNNS) and 630 to 657 (TVYDGPLTPPSSETMSKRGSREFSSNSN). Residues 576–593 (LSSNSPSKARDGQNSNNS) are compositionally biased toward low complexity.

Its function is as follows. Cytoplasmic polyadenylation element binding protein that binds to and regulates the translation of specific mRNAs. The protein is Cytoplasmic polyadenylation element-binding protein 3 (cpb-3) of Caenorhabditis japonica.